The sequence spans 601 residues: DNA topoisomerase I, mitochondrial (601 aa).

The N-terminal 50 residues, 1-50 (MRVVRLLRLRAALTLLGEVPRRPASRGVPGSRRTQKGSGARWEKEKHEDG), are a transit peptide targeting the mitochondrion. Residues 22 to 48 (RPASRGVPGSRRTQKGSGARWEKEKHE) are disordered. 3 interaction with DNA regions span residues 261–262 (KY), 324–329 (RAGNEK), and 421–423 (TAK). Residues 268 to 601 (CSKLKGETAW…LAMAGEDFEF (334 aa)) form the Topo IB-type catalytic domain. Tyrosine 559 serves as the catalytic O-(3'-phospho-DNA)-tyrosine intermediate.

The protein belongs to the type IB topoisomerase family. It depends on Ca(2+) as a cofactor. Mg(2+) is required as a cofactor.

It localises to the mitochondrion. It carries out the reaction ATP-independent breakage of single-stranded DNA, followed by passage and rejoining.. In terms of biological role, releases the supercoiling and torsional tension of DNA introduced during duplication of mitochondrial DNA by transiently cleaving and rejoining one strand of the DNA duplex. Introduces a single-strand break via transesterification at a target site in duplex DNA. The scissile phosphodiester is attacked by the catalytic tyrosine of the enzyme, resulting in the formation of a DNA-(3'-phosphotyrosyl)-enzyme intermediate and the expulsion of a 5'-OH DNA strand. The free DNA strand then rotates around the intact phosphodiester bond on the opposing strand, thus removing DNA supercoils. Finally, in the religation step, the DNA 5'-OH attacks the covalent intermediate to expel the active-site tyrosine and restore the DNA phosphodiester backbone. In Pan troglodytes (Chimpanzee), this protein is DNA topoisomerase I, mitochondrial (TOP1MT).